A 273-amino-acid chain; its full sequence is Diaminopimelate epimerase (273 aa).

Substrate is bound by residues asparagine 11 and asparagine 60. Cysteine 69 serves as the catalytic Proton donor. Substrate-binding positions include 70-71 (GN), asparagine 181, and 199-200 (ER). Residue cysteine 209 is the Proton acceptor of the active site. A substrate-binding site is contributed by 210–211 (GT).

It belongs to the diaminopimelate epimerase family. Homodimer.

It is found in the cytoplasm. It catalyses the reaction (2S,6S)-2,6-diaminopimelate = meso-2,6-diaminopimelate. It functions in the pathway amino-acid biosynthesis; L-lysine biosynthesis via DAP pathway; DL-2,6-diaminopimelate from LL-2,6-diaminopimelate: step 1/1. Its function is as follows. Catalyzes the stereoinversion of LL-2,6-diaminopimelate (L,L-DAP) to meso-diaminopimelate (meso-DAP), a precursor of L-lysine and an essential component of the bacterial peptidoglycan. This is Diaminopimelate epimerase from Helicobacter pylori (strain ATCC 700392 / 26695) (Campylobacter pylori).